A 310-amino-acid chain; its full sequence is Pseudouridine-5'-phosphate glycosidase (310 aa).

The Proton donor role is filled by glutamate 26. Lysine 87 and valine 107 together coordinate substrate. Aspartate 139 is a Mn(2+) binding site. Residue 141 to 143 (SAD) participates in substrate binding. The active-site Nucleophile is lysine 160.

This sequence belongs to the pseudouridine-5'-phosphate glycosidase family. As to quaternary structure, homotrimer. It depends on Mn(2+) as a cofactor.

It catalyses the reaction D-ribose 5-phosphate + uracil = psi-UMP + H2O. Its function is as follows. Catalyzes the reversible cleavage of pseudouridine 5'-phosphate (PsiMP) to ribose 5-phosphate and uracil. Functions biologically in the cleavage direction, as part of a pseudouridine degradation pathway. This Roseobacter denitrificans (strain ATCC 33942 / OCh 114) (Erythrobacter sp. (strain OCh 114)) protein is Pseudouridine-5'-phosphate glycosidase.